The chain runs to 76 residues: Virulence-associated protein VagC (76 aa).

One can recognise a SpoVT-AbrB domain in the interval 4–45 (VSIFKNGNNRAIRLPRDLDFEGVSELEIVREGDSIILRPVRP).

It belongs to the VapB family.

In Salmonella dublin, this protein is Virulence-associated protein VagC (vagC).